Here is a 346-residue protein sequence, read N- to C-terminus: tRNA N6-adenosine threonylcarbamoyltransferase (346 aa).

Positions 111 and 115 each coordinate Fe cation. Residues 134 to 138 (LVSGG), Asp167, Gly180, and Asn279 each bind substrate. Residue Asp307 participates in Fe cation binding.

This sequence belongs to the KAE1 / TsaD family. Requires Fe(2+) as cofactor.

It localises to the cytoplasm. It carries out the reaction L-threonylcarbamoyladenylate + adenosine(37) in tRNA = N(6)-L-threonylcarbamoyladenosine(37) in tRNA + AMP + H(+). Required for the formation of a threonylcarbamoyl group on adenosine at position 37 (t(6)A37) in tRNAs that read codons beginning with adenine. Is involved in the transfer of the threonylcarbamoyl moiety of threonylcarbamoyl-AMP (TC-AMP) to the N6 group of A37, together with TsaE and TsaB. TsaD likely plays a direct catalytic role in this reaction. The sequence is that of tRNA N6-adenosine threonylcarbamoyltransferase from Burkholderia multivorans (strain ATCC 17616 / 249).